The sequence spans 398 residues: Trans-2-enoyl-CoA reductase [NADH] (398 aa).

NAD(+) contacts are provided by residues Gly47–Phe52, Phe74–Glu75, Asp111–Ala112, and Leu139–Ala140. Tyr225 provides a ligand contact to substrate. Residue Tyr235 is the Proton donor of the active site. NAD(+) contacts are provided by residues Lys244 and Ile274 to Thr276.

The protein belongs to the TER reductase family. In terms of assembly, monomer.

It carries out the reaction a 2,3-saturated acyl-CoA + NAD(+) = a (2E)-enoyl-CoA + NADH + H(+). It functions in the pathway lipid metabolism; fatty acid biosynthesis. In terms of biological role, involved in the fatty acid synthesis (FAS II). Catalyzes the reduction of a carbon-carbon double bond in an enoyl moiety that is covalently linked to a coenzyme A (CoA). The protein is Trans-2-enoyl-CoA reductase [NADH] of Clostridium beijerinckii (strain ATCC 51743 / NCIMB 8052) (Clostridium acetobutylicum).